Here is a 334-residue protein sequence, read N- to C-terminus: D-fructose 1,6-bisphosphatase class 2/sedoheptulose 1,7-bisphosphatase (334 aa).

Mn(2+)-binding residues include Asp33, Glu57, Asp85, and Glu88. Substrate-binding positions include 88–90, Tyr119, 164–166, and 186–188; these read EGT, RAR, and DGD. Position 213 (Glu213) interacts with Mn(2+).

Belongs to the FBPase class 2 family. Homotetramer. Mn(2+) serves as cofactor.

The enzyme catalyses beta-D-fructose 1,6-bisphosphate + H2O = beta-D-fructose 6-phosphate + phosphate. It catalyses the reaction D-sedoheptulose 1,7-bisphosphate + H2O = D-sedoheptulose 7-phosphate + phosphate. It functions in the pathway carbohydrate biosynthesis; Calvin cycle. In terms of biological role, catalyzes the hydrolysis of fructose 1,6-bisphosphate (Fru 1,6-P2) and sedoheptulose 1,7-bisphosphate (Sed 1,7-P2) to fructose 6-phosphate and sedoheptulose 7-phosphate, respectively. The chain is D-fructose 1,6-bisphosphatase class 2/sedoheptulose 1,7-bisphosphatase from Synechococcus sp. (strain CC9311).